A 218-amino-acid chain; its full sequence is Large ribosomal subunit protein uL3 (218 aa).

This sequence belongs to the universal ribosomal protein uL3 family. In terms of assembly, part of the 50S ribosomal subunit. Forms a cluster with proteins L14 and L19.

One of the primary rRNA binding proteins, it binds directly near the 3'-end of the 23S rRNA, where it nucleates assembly of the 50S subunit. In Corynebacterium urealyticum (strain ATCC 43042 / DSM 7109), this protein is Large ribosomal subunit protein uL3.